We begin with the raw amino-acid sequence, 170 residues long: Large ribosomal subunit protein uL10 (170 aa).

Belongs to the universal ribosomal protein uL10 family. In terms of assembly, part of the ribosomal stalk of the 50S ribosomal subunit. The N-terminus interacts with L11 and the large rRNA to form the base of the stalk. The C-terminus forms an elongated spine to which L12 dimers bind in a sequential fashion forming a multimeric L10(L12)X complex.

Functionally, forms part of the ribosomal stalk, playing a central role in the interaction of the ribosome with GTP-bound translation factors. The sequence is that of Large ribosomal subunit protein uL10 from Chlamydia abortus (strain DSM 27085 / S26/3) (Chlamydophila abortus).